Reading from the N-terminus, the 130-residue chain is Small ribosomal subunit protein uS8 (130 aa).

This sequence belongs to the universal ribosomal protein uS8 family. Part of the 30S ribosomal subunit.

One of the primary rRNA binding proteins, it binds directly to 16S rRNA central domain where it helps coordinate assembly of the platform of the 30S subunit. This is Small ribosomal subunit protein uS8 from Haloquadratum walsbyi (strain DSM 16790 / HBSQ001).